We begin with the raw amino-acid sequence, 105 residues long: Small ribosomal subunit protein uS10 (105 aa).

Belongs to the universal ribosomal protein uS10 family. Part of the 30S ribosomal subunit.

Functionally, involved in the binding of tRNA to the ribosomes. This chain is Small ribosomal subunit protein uS10, found in Oleidesulfovibrio alaskensis (strain ATCC BAA-1058 / DSM 17464 / G20) (Desulfovibrio alaskensis).